The chain runs to 887 residues: Exosome complex component 10 (887 aa).

Basic and acidic residues predominate over residues 1–10 (MAPPSPREHQ). A disordered region spans residues 1–23 (MAPPSPREHQSAPATSATKPDAE). Lysine 19 participates in a covalent cross-link: Glycyl lysine isopeptide (Lys-Gly) (interchain with G-Cter in SUMO2). The 3'-5' exonuclease domain maps to 289 to 455 (HLVSSLDELV…YIYDRMRLEL (167 aa)). Residues aspartate 313, glutamate 315, aspartate 371, and aspartate 440 each contribute to the Mg(2+) site. An HRDC domain is found at 503–583 (NSQQLTAFQL…QQAREMPLLK (81 aa)). Residue lysine 583 forms a Glycyl lysine isopeptide (Lys-Gly) (interchain with G-Cter in SUMO1); alternate linkage. A Glycyl lysine isopeptide (Lys-Gly) (interchain with G-Cter in SUMO2); alternate cross-link involves residue lysine 583. Lysine 710 participates in a covalent cross-link: Glycyl lysine isopeptide (Lys-Gly) (interchain with G-Cter in SUMO2). Disordered stretches follow at residues 734 to 757 (KEPK…AKEE) and 777 to 887 (NATK…WPKR). Residues 778–796 (ATKKRERATSDLRTIEQKQ) show a composition bias toward basic and acidic residues. Serine 823 carries the phosphoserine modification. Glycyl lysine isopeptide (Lys-Gly) (interchain with G-Cter in SUMO2) cross-links involve residues lysine 835, lysine 861, and lysine 875.

It belongs to the exosome component 10/RRP6 family. In terms of assembly, component of the RNA exosome complex. The catalytically inactive RNA exosome core complex (Exo-9) associates with the catalytic subunit EXOSC10/RRP6 (via its N-terminus). Exo-9 may associate with DIS3 to form the nucleolar exosome complex, or DIS3L to form the cytoplasmic exosome complex. The RNA exosome complex interacts with cofactors C1D/RRP47, MPHOSPH6/MPP6 and MTREX/MTR4. Interacts with MTREX; the interaction with MTREX mediates the association of MTREX with nuclear RNA exosomes. Part of the small subunit (SSU) processome, composed of more than 70 proteins and the RNA chaperone small nucleolar RNA (snoRNA) U3. Interacts with ALYREF/THOC4. Interacts with DHX36; this interaction occurs in a RNase-insensitive manner. Interacts with NRDE2. Interacts (via C-terminus) with USP36 (via C-terminus); the interaction is facilitated by the association with RNA and promotes sumoylation of EXOSC10. Requires Mg(2+) as cofactor. In terms of processing, sumoylated by USP36; sumoylation does not significantly affect EXOSC10 nucleolar localization and association with core exosome and USP36, but regulates the nucleolar RNA exosome activity in rRNA processing by promoting binding of EXOSC10 to pre-rRNAs. Effects of sumoylation on EXOSC10 levels vary between different studies. Sumoylation of EXOSC10 is required for the modulation of EXOSC10 effects on cellular protein translation and cell proliferation. Sumoylation is promoted by mild hypothermia. As to expression, expressed in ovary (at protein level). Expressed in testis (at protein level). Expressed in lung (at protein level).

The protein localises to the cytoplasm. The protein resides in the nucleus. It is found in the nucleolus. Its subcellular location is the nucleoplasm. In terms of biological role, catalytic component of the RNA exosome complex which has 3'-&gt;5' exoribonuclease activity and participates in a multitude of cellular RNA processing and degradation events. In the nucleus, the RNA exosome complex is involved in proper maturation of stable RNA species such as rRNA, snRNA and snoRNA, in the elimination of RNA processing by-products and non-coding 'pervasive' transcripts, such as antisense RNA species and promoter-upstream transcripts (PROMPTs), and of mRNAs with processing defects, thereby limiting or excluding their export to the cytoplasm. Part of the small subunit (SSU) processome, first precursor of the small eukaryotic ribosomal subunit. During the assembly of the SSU processome in the nucleolus, many ribosome biogenesis factors, an RNA chaperone and ribosomal proteins associate with the nascent pre-rRNA and work in concert to generate RNA folding, modifications, rearrangements and cleavage as well as targeted degradation of pre-ribosomal RNA by the RNA exosome. The RNA exosome may be involved in Ig class switch recombination (CSR) and/or Ig variable region somatic hypermutation (SHM) by targeting AICDA deamination activity to transcribed dsDNA substrates. In the cytoplasm, the RNA exosome complex is involved in general mRNA turnover and specifically degrades inherently unstable mRNAs containing AU-rich elements (AREs) within their 3' untranslated regions, and in RNA surveillance pathways, preventing translation of aberrant mRNAs. It seems to be involved in degradation of histone mRNA. EXOSC10 is required for nucleolar localization of C1D and probably mediates the association of MTREX, C1D and MPHOSPH6 with the RNA exosome involved in the maturation of 5.8S rRNA. Plays a role in the recruitment of replication protein A complex (RPA) and RAD51 to DNA double-strand breaks caused by irradiation, contributing to DNA repair by homologous recombination. Regulates levels of damage-induced RNAs in order to prevent DNA-RNA hybrid formation at DNA double-strand breaks and limit DNA end resection after damage. Plays a role in oocyte development, maturation and survival. Required for normal testis development and mitotic division of spermatogonia. Plays a role in proper embryo development. Required for global protein translation. Required for cell proliferation. This is Exosome complex component 10 (Exosc10) from Mus musculus (Mouse).